The primary structure comprises 174 residues: Ribulose bisphosphate carboxylase small subunit, chloroplastic 1 (174 aa).

Residues Met1 to Arg45 constitute a chloroplast transit peptide.

This sequence belongs to the RuBisCO small chain family. As to quaternary structure, heterohexadecamer of 8 large and 8 small subunits.

The protein localises to the plastid. It is found in the chloroplast. Functionally, ruBisCO catalyzes two reactions: the carboxylation of D-ribulose 1,5-bisphosphate, the primary event in carbon dioxide fixation, as well as the oxidative fragmentation of the pentose substrate. Both reactions occur simultaneously and in competition at the same active site. Although the small subunit is not catalytic it is essential for maximal activity. This is Ribulose bisphosphate carboxylase small subunit, chloroplastic 1 from Triticum aestivum (Wheat).